The chain runs to 491 residues: GTPase Der (491 aa).

Residues 3–178 (AKIALVGRPN…EMRDLLPEED (176 aa)) enclose the EngA-type G 1 domain. GTP is bound by residues 9–16 (GRPNVGKS), 57–61 (DTGGI), and 130–133 (NKVD). Acidic residues predominate over residues 198–224 (DAETEDGASASETEEDITEETVEDEPE). The interval 198–225 (DAETEDGASASETEEDITEETVEDEPEA) is disordered. The EngA-type G 2 domain occupies 227-400 (LRLCMLGRPN…LAARIRRECS (174 aa)). Residues 233-240 (GRPNAGKS), 280-284 (DTAGV), and 345-348 (NKMD) contribute to the GTP site. In terms of domain architecture, KH-like spans 401–485 (VRIPTGQLNR…PMRVHFRSSH (85 aa)).

The protein belongs to the TRAFAC class TrmE-Era-EngA-EngB-Septin-like GTPase superfamily. EngA (Der) GTPase family. Associates with the 50S ribosomal subunit.

Functionally, GTPase that plays an essential role in the late steps of ribosome biogenesis. This Nitratidesulfovibrio vulgaris (strain ATCC 29579 / DSM 644 / CCUG 34227 / NCIMB 8303 / VKM B-1760 / Hildenborough) (Desulfovibrio vulgaris) protein is GTPase Der.